The primary structure comprises 714 residues: MALTAALKAQIAAWYKALQDQIPDFIPRAPQRQMIADVARTLAGEEGRHLAIEAPTGVGKTLSYLIPGIAIAREEQKTLVVSTANVALQDQIFSKDLPLLRKIIPDLRFTAAFGRGRYVCPRNLAALASSEPTQQDLLAFLDDELTPNNQEEQKRCARLKGDLDGYKWDGLRDHTDIAIDDDLWRRLSTDKASCLNRNCHYYRECPFFVARREIQEAEVVVANHALVMAAMESEAVLPEPKHLLLVLDEGHHLPDVARDALEMSAEITASWYRLQLDLFSKLVATSMEQFRPKTTPPLANPERLNAHCEEVYELIASLNAILNLYMPAAQEAEHRFAMGELPDEVMEICQRLAKLTETLRGLAESFLNDLSEKTGSHDIVRLHRVILQMNWALGMFEAQSKLWRLASMAQSSGAPVSKWATREIREGQLHVWFHCVGIRVSDQLERLLWRSVPHIIVTSATLRSLNSFSRLQEMSGLKEKAGDRFVALDSPFNHVEQGKLVIPQMRYEPTIDNEEQHIAEMAAYFREQLESKKHHGMLVLFASGRAMQRFLEHVADVRLLLLVQGDQPRYRLVELHRKRVESGERSVLVGLQSFAEGLDLKGELLTQVHIHKIAFPPIDSPVVITEGEWLKSLNRYPFEVQSLPSASFNLIQQVGRLIRSHACRGEVVIYDKRLLTKNYGQRLLNALPVFPIEQPAVPDVIVKPKAKPARRRRR.

One can recognise a Helicase ATP-binding domain in the interval A17–T294. ATP is bound at residue A54–T61. The [4Fe-4S] cluster site is built by C120, C194, C199, and C205. The short motif at D248 to H251 is the DEAH box element. Residues H517–P698 form the Helicase C-terminal domain.

The protein belongs to the helicase family. DinG subfamily. Type 1 sub-subfamily. It depends on [4Fe-4S] cluster as a cofactor.

It carries out the reaction Couples ATP hydrolysis with the unwinding of duplex DNA at the replication fork by translocating in the 5'-3' direction. This creates two antiparallel DNA single strands (ssDNA). The leading ssDNA polymer is the template for DNA polymerase III holoenzyme which synthesizes a continuous strand.. The catalysed reaction is ATP + H2O = ADP + phosphate + H(+). Functionally, DNA-dependent ATPase and 5'-3' DNA helicase. Unwinds D-loops, R-loops, forked DNA and G-quadruplex DNA. This is ATP-dependent DNA helicase DinG from Salmonella choleraesuis (strain SC-B67).